We begin with the raw amino-acid sequence, 1828 residues long: Proteasome activator complex subunit 4 (1828 aa).

HEAT repeat units lie at residues 462-506, 985-1024, 1164-1202, 1339-1377, 1621-1659, and 1665-1703; these read PEGP…LVDC, NFCCRDLIPLVLEFLRPERQDVTQQQFKGALYCLLGNHGG, YVLPVRAIRYLVQCLNHDALIVRKMAISTVAGILKQLKR, DAFLPIIKPHLERLVADSHESTQRCAAEIVAGLIRGSKH, PVQVPLVLDVLRQTARSSSWHARYTVLTYIQTMVFYNLF, and EESVQGVRWLILQLMEDEQLEVREMAATTLSGLLQCNFL. A bromodomain-like (BRDL) region spans residues 1635-1723; sequence ARSSSWHARY…EALCKTRLPK (89 aa).

This sequence belongs to the BLM10 family. As to quaternary structure, homodimer. Interacts with the 20S and 26S proteasomes.

Its subcellular location is the cytoplasm. It is found in the cytosol. It localises to the nucleus. The protein localises to the nucleus speckle. In terms of biological role, associated component of the proteasome that specifically recognizes acetylated histones and promotes ATP- and ubiquitin-independent degradation of core histones during DNA damage response. Recognizes and binds acetylated histones via its bromodomain-like (BRDL) region and activates the proteasome by opening the gated channel for substrate entry. Binds to the core proteasome via its C-terminus, which occupies the same binding sites as the proteasomal ATPases, opening the closed structure of the proteasome via an active gating mechanism. involved in DNA damage response in somatic cells: binds to acetylated histones and promotes degradation of histones. In Xenopus laevis (African clawed frog), this protein is Proteasome activator complex subunit 4 (psme4).